The following is a 1197-amino-acid chain: PAN2-PAN3 deadenylation complex catalytic subunit PAN2 (1197 aa).

4 WD repeats span residues 153–193 (DEAE…QKYT), 195–231 (EVPG…VEHE), 244–280 (VHGN…ATTP), and 328–367 (TVGP…TFNT). The linker stretch occupies residues 368–485 (YSRETDFALP…IGREEEPHLY (118 aa)). One can recognise a USP domain in the interval 486–919 (MVAKKYRKVT…VPAILYYARR (434 aa)). Positions 970–1142 (VGLDAEFVTL…EDARTALQLY (173 aa)) constitute an Exonuclease domain. Residues Asp-973, Glu-975, Asp-1082, and Asp-1134 each contribute to the a divalent metal cation site. The interval 1176–1197 (VPEPDSQSSPKHGAVFPPVLAL) is disordered.

It belongs to the peptidase C19 family. PAN2 subfamily. As to quaternary structure, forms a heterotrimer with an asymmetric homodimer of the regulatory subunit PAN3 to form the poly(A)-nuclease (PAN) deadenylation complex. A divalent metal cation serves as cofactor.

Its subcellular location is the cytoplasm. The protein resides in the P-body. It is found in the nucleus. It catalyses the reaction Exonucleolytic cleavage of poly(A) to 5'-AMP.. Positively regulated by the regulatory subunit PAN3. Functionally, catalytic subunit of the poly(A)-nuclease (PAN) deadenylation complex, one of two cytoplasmic mRNA deadenylases involved in general and miRNA-mediated mRNA turnover. PAN specifically shortens poly(A) tails of RNA and the activity is stimulated by poly(A)-binding protein (PABP). PAN deadenylation is followed by rapid degradation of the shortened mRNA tails by the CCR4-NOT complex. Deadenylated mRNAs are then degraded by two alternative mechanisms, namely exosome-mediated 3'-5' exonucleolytic degradation, or deadenylation-dependent mRNA decaping and subsequent 5'-3' exonucleolytic degradation by XRN1. This chain is PAN2-PAN3 deadenylation complex catalytic subunit PAN2, found in Gallus gallus (Chicken).